A 37-amino-acid chain; its full sequence is Bacteriocin lactococcin MMFII (37 aa).

Cys-9 and Cys-14 form a disulfide bridge.

It is found in the secreted. Functionally, bacteriocin active against Listeria monocytogenes and Lactococcus cremoris. This Lactococcus lactis subsp. lactis (Streptococcus lactis) protein is Bacteriocin lactococcin MMFII.